The primary structure comprises 1907 residues: Chromatin modification-related protein EAF1 B (1907 aa).

4 disordered regions span residues 108–208 (ASPH…TDLV), 261–287 (NRVSSNSLNTKVDGEPVVRESTAGSKT), 323–373 (GGSP…SHAN), and 449–469 (NQSHRSTAEMQTKEKSSETEK). Residues 140 to 151 (SENKSVEGERNL) are compositionally biased toward basic and acidic residues. Polar residues-rich tracts occupy residues 261–270 (NRVSSNSLNT), 333–342 (GQKNSSTQLN), and 355–372 (TNRGATGTNGLESESSHA). The HSA domain occupies 563-641 (CGTAPVEVRE…LSYAILQFWS (79 aa)). Disordered stretches follow at residues 836–909 (SSSL…AVQK) and 928–952 (AETSGKPKKKKKTHQGSAYDQTWHL). The span at 856–866 (RRVRTASRHRV) shows a compositional bias: basic residues. 2 stretches are compositionally biased toward polar residues: residues 884–898 (TDASSGDTSSFQDEY) and 942–952 (QGSAYDQTWHL). Positions 1049 to 1105 (SGNPWSLFEDQALVVLVHDMGPNWELISDAMNSTLKIKYIYRNPTECKDRHKILMDK) constitute an SANT domain. Disordered stretches follow at residues 1107 to 1131 (AGDGADSAEDSGNSQSYPSTLPGIP), 1235 to 1266 (PVLPTSGAHPSTPGSSGVVLSNNLPTTSGLQS), 1296 to 1319 (LSGRNLQQPSLSTPAAVSGSDRGH), 1429 to 1465 (GHLSQQHQMSPQSHVLGNSHHPHLQSPSQATGAQQEA), 1477 to 1594 (YLQQ…QQLN), 1638 to 1703 (VRPD…SPAT), 1767 to 1791 (VPQSVTNTTQTASMGTTKGMPQASN), and 1824 to 1907 (VNNS…TKVE). Polar residues-rich tracts occupy residues 1116–1125 (DSGNSQSYPS), 1242–1266 (AHPSTPGSSGVVLSNNLPTTSGLQS), 1296–1310 (LSGRNLQQPSLSTPA), 1431–1444 (LSQQHQMSPQSHVL), and 1453–1462 (QSPSQATGAQ). The segment covering 1493–1512 (PHVQQPQGSSVSSSSQNSPQ) has biased composition (low complexity). A compositionally biased stretch (pro residues) spans 1513–1529 (TQPPVSPQPLSMPPVSP). Polar residues-rich tracts occupy residues 1532-1545 (NINAMAQQKPQKSQ), 1554-1568 (SPQSGTSGVNNQAGK), 1585-1594 (RQPTQGQQLN), 1640-1655 (PDQQSSVGTTTSTDLQ), 1662-1672 (PLSSNHSQQLP), 1681-1703 (PSPQQQMQLHSDNSIQGQSSPAT), 1769-1782 (QSVTNTTQTASMGT), and 1824-1844 (VNNSNTDSAGNDPVSTPNQGL). Basic and acidic residues-rich tracts occupy residues 1863–1872 (SEEKRPKLPE) and 1882–1892 (LASEEQPHLEE).

The protein belongs to the EAF1 family. As to quaternary structure, component of the NuA4 histone acetyltransferase complex. Interacts with ARP4 and SWC4, and (via HSA domain) with TAF14 and TAF14B. In terms of tissue distribution, expressed in leaves.

Its subcellular location is the nucleus. Its function is as follows. Component of the NuA4 histone acetyltransferase complex which is involved in transcriptional activation of selected genes principally by acetylation of nucleosomal histone H4 and H2A. The sequence is that of Chromatin modification-related protein EAF1 B (EAF1B) from Arabidopsis thaliana (Mouse-ear cress).